We begin with the raw amino-acid sequence, 212 residues long: uncharacterized protein (212 aa).

A signal peptide spans 1 to 20 (MKNLTIGAIFLIFFAVSAFA).

The protein resides in the virion. This is an uncharacterized protein from Acanthamoeba polyphaga (Amoeba).